A 417-amino-acid polypeptide reads, in one-letter code: Carboxypeptidase B (417 aa).

The N-terminal stretch at M1–H16 is a signal peptide. A propeptide spans H17 to R110 (activation peptide). Residues K118–V412 form the Peptidase M14 domain. C173 and C186 are oxidised to a cystine. 2 residues coordinate Zn(2+): H176 and E179. Substrate is bound by residues H176–E179, R234, and N251–R252. 2 disulfide bridges follow: C245–C268 and C259–C273. H304 is a Zn(2+) binding site. Substrate-binding positions include S305–Y306 and Y356. The active-site Proton donor/acceptor is E378.

The protein belongs to the peptidase M14 family. Zn(2+) serves as cofactor.

The protein localises to the secreted. It localises to the zymogen granule lumen. It carries out the reaction Preferential release of a C-terminal lysine or arginine amino acid.. This is Carboxypeptidase B (CPB1) from Bos taurus (Bovine).